The chain runs to 627 residues: Druantia protein DruC (627 aa).

Its subcellular location is the cytoplasm. Functionally, component of antiviral defense system Druantia type I, composed of DruA, DruB, DruC, DruD and DruE. Expression of Druantia in E.coli (strain MG1655) confers resistance to phage lambda, SECphi18, SECphi27 and T4. This chain is Druantia protein DruC, found in Escherichia coli (strain UMEA 4076-1).